Here is a 531-residue protein sequence, read N- to C-terminus: Tubulin-folding cofactor E (531 aa).

The CAP-Gly domain maps to 32-76; sequence GDVEGYSGTWIGVDWDQDGDGKHNGSVNGVFYFNGRSQSSASFVR. LRR repeat units follow at residues 84–109, 159–183, 185–213, 233–256, 260–284, 285–308, 318–342, 344–366, and 474–497; these read ITLL…MYVL, LPNL…ALCE, LPAL…NIRV, LPGI…SSSD, FNSL…KLSQ, LPCL…VNGT, FPSL…ALNG, PQLV…GVPR, and VGKL…LFLQ.

It belongs to the TBCE family. As to quaternary structure, supercomplex made of cofactors A to E. Cofactors A and D function by capturing and stabilizing tubulin in a quasi-native conformation. Cofactor E binds to the cofactor D-tubulin complex; interaction with cofactor C then causes the release of tubulin polypeptides that are committed to the native state.

It is found in the cytoplasm. Functionally, essential tubulin-folding protein involved in the tubulin folding pathway. Not essential for cell viability. Probably involved in the binding of alpha-tubulin in the multimeric supercomplex. This Arabidopsis thaliana (Mouse-ear cress) protein is Tubulin-folding cofactor E (TFCE).